A 271-amino-acid chain; its full sequence is Autophagy-related protein 27 (271 aa).

A signal peptide spans 1–19; sequence MVSKTWICGFISIITVVQA. The 147-residue stretch at 20–166 folds into the MRH domain; the sequence is LSCEKHDVLK…TLKGPSGCLK (147 aa). Residues 20 to 197 lie on the Lumenal side of the membrane; the sequence is LSCEKHDVLK…KKPAKKAGGT (178 aa). 3 disulfides stabilise this stretch: Cys22-Cys60, Cys71-Cys78, and Cys135-Cys164. A disordered region spans residues 161–190; it reads PSGCLKSKDDDKKNGDGDNGKDGDNEGKKP. Positions 166 to 189 are enriched in basic and acidic residues; that stretch reads KSKDDDKKNGDGDNGKDGDNEGKK. The chain crosses the membrane as a helical span at residues 198–218; sequence LWFTWLFLYALLFTLIYLMVV. The Cytoplasmic portion of the chain corresponds to 219–271; the sequence is SFLNTRGGSFQDFRAEFIQRSTQFLTSLPEFCREVVSRILGRSTAQRGGYSAV.

Belongs to the ATG27 family. In terms of assembly, forms a complex with ATG9 and ATG23.

It is found in the cytoplasmic vesicle membrane. The protein localises to the golgi apparatus membrane. It localises to the mitochondrion membrane. The protein resides in the preautophagosomal structure membrane. In terms of biological role, effector of VPS34 phosphatidylinositol 3-phosphate kinase signaling. Regulates the cytoplasm to vacuole transport (Cvt) vesicle formation. Plays a role in ATG protein retrieval from the pre-autophagosomal structure (PAS) and is especially required for autophagy-dependent cycling of ATG9. The polypeptide is Autophagy-related protein 27 (ATG27) (Saccharomyces cerevisiae (strain YJM789) (Baker's yeast)).